Consider the following 153-residue polypeptide: MYAIVRLRGQVNVRYTIEDTMKMLRLHKVNHCVLVPENPHFKGMVQKVKDYVAFGKIDANTLAEILENRGRLEGDTRLTEEYIRENTAYDSIQAFAEAVVNGETTLKSVPKLKPVFRLHPPRKGHAGIKRTVQQGGELGDHGDGINALLHKMR.

This sequence belongs to the universal ribosomal protein uL30 family. Part of the 50S ribosomal subunit.

In Methanosarcina barkeri (strain Fusaro / DSM 804), this protein is Large ribosomal subunit protein uL30.